A 102-amino-acid polypeptide reads, in one-letter code: UPF0751 protein Dhaf_1351 (102 aa).

The protein belongs to the UPF0751 family.

In Desulfitobacterium hafniense (strain DSM 10664 / DCB-2), this protein is UPF0751 protein Dhaf_1351.